The following is a 428-amino-acid chain: Adenosylmethionine-8-amino-7-oxononanoate aminotransferase (428 aa).

Residue tryptophan 52 coordinates substrate. 112-113 (GS) serves as a coordination point for pyridoxal 5'-phosphate. Tyrosine 144 is a binding site for substrate. A pyridoxal 5'-phosphate-binding site is contributed by aspartate 245. Substrate-binding residues include lysine 274 and glycine 307. The residue at position 274 (lysine 274) is an N6-(pyridoxal phosphate)lysine. 308–309 (PT) is a binding site for pyridoxal 5'-phosphate. A substrate-binding site is contributed by arginine 391.

It belongs to the class-III pyridoxal-phosphate-dependent aminotransferase family. BioA subfamily. Homodimer. Pyridoxal 5'-phosphate is required as a cofactor.

Its subcellular location is the cytoplasm. It carries out the reaction (8S)-8-amino-7-oxononanoate + S-adenosyl-L-methionine = S-adenosyl-4-methylsulfanyl-2-oxobutanoate + (7R,8S)-7,8-diammoniononanoate. Its pathway is cofactor biosynthesis; biotin biosynthesis; 7,8-diaminononanoate from 8-amino-7-oxononanoate (SAM route): step 1/1. In terms of biological role, catalyzes the transfer of the alpha-amino group from S-adenosyl-L-methionine (SAM) to 7-keto-8-aminopelargonic acid (KAPA) to form 7,8-diaminopelargonic acid (DAPA). It is the only aminotransferase known to utilize SAM as an amino donor. This is Adenosylmethionine-8-amino-7-oxononanoate aminotransferase from Buchnera aphidicola subsp. Acyrthosiphon pisum (strain APS) (Acyrthosiphon pisum symbiotic bacterium).